We begin with the raw amino-acid sequence, 232 residues long: Ubiquinone biosynthesis O-methyltransferase (232 aa).

S-adenosyl-L-methionine-binding residues include R36, G55, D76, and M120.

It belongs to the methyltransferase superfamily. UbiG/COQ3 family.

It catalyses the reaction a 3-demethylubiquinol + S-adenosyl-L-methionine = a ubiquinol + S-adenosyl-L-homocysteine + H(+). The catalysed reaction is a 3-(all-trans-polyprenyl)benzene-1,2-diol + S-adenosyl-L-methionine = a 2-methoxy-6-(all-trans-polyprenyl)phenol + S-adenosyl-L-homocysteine + H(+). It participates in cofactor biosynthesis; ubiquinone biosynthesis. Functionally, O-methyltransferase that catalyzes the 2 O-methylation steps in the ubiquinone biosynthetic pathway. This Burkholderia vietnamiensis (strain G4 / LMG 22486) (Burkholderia cepacia (strain R1808)) protein is Ubiquinone biosynthesis O-methyltransferase.